The chain runs to 413 residues: Arginine biosynthesis bifunctional protein ArgJ (413 aa).

Residues T158, K184, T195, E285, N408, and S413 each contribute to the substrate site. The Nucleophile role is filled by T195.

The protein belongs to the ArgJ family. In terms of assembly, heterotetramer of two alpha and two beta chains.

It localises to the cytoplasm. The catalysed reaction is N(2)-acetyl-L-ornithine + L-glutamate = N-acetyl-L-glutamate + L-ornithine. It carries out the reaction L-glutamate + acetyl-CoA = N-acetyl-L-glutamate + CoA + H(+). The protein operates within amino-acid biosynthesis; L-arginine biosynthesis; L-ornithine and N-acetyl-L-glutamate from L-glutamate and N(2)-acetyl-L-ornithine (cyclic): step 1/1. Its pathway is amino-acid biosynthesis; L-arginine biosynthesis; N(2)-acetyl-L-ornithine from L-glutamate: step 1/4. Catalyzes two activities which are involved in the cyclic version of arginine biosynthesis: the synthesis of N-acetylglutamate from glutamate and acetyl-CoA as the acetyl donor, and of ornithine by transacetylation between N(2)-acetylornithine and glutamate. The sequence is that of Arginine biosynthesis bifunctional protein ArgJ from Agrobacterium fabrum (strain C58 / ATCC 33970) (Agrobacterium tumefaciens (strain C58)).